The primary structure comprises 220 residues: MKENKFEMIYKIYKILLDYYGHQNWWPAETRYEVVVGAILTQNTSWKNVERAINNLKMEDLLEEVKILNVDEDKLKELIRPAGFYNLKAKRLKNVTKFIVENYGNTEEMAKTDKDTLILRAELLSINGVGKETADSILLYALDRESFVVDAYTKRMFSRLGVINEKAKYDEIKEIFEKNLPKDLEIYKEYHALIVEHCKKFCRKKALCDNCPIKEFCLSK.

The [4Fe-4S] cluster site is built by C202, C208, C211, and C217.

Belongs to the Nth/MutY family. [4Fe-4S] cluster is required as a cofactor.

This Methanocaldococcus jannaschii (strain ATCC 43067 / DSM 2661 / JAL-1 / JCM 10045 / NBRC 100440) (Methanococcus jannaschii) protein is Putative DNA repair glycosylase MJ1434.